Here is a 702-residue protein sequence, read N- to C-terminus: MAAPMTPAARPEDYEAALNAALADVPELARLLEIDPYLKPYAVDFQRRYKQFSQILKNIGENEGGIDKFSRGYESFGVHRCADGGLYCKEWAPGAEGVFLTGDFNGWNPFSYPYKKLDYGKWELYIPPKQNKSVLVPHGSKLKVVITSKSGEILYRISPWAKYVVREGDNVNYDWIHWDPEHSYEFKHSRPKKPRSLRIYESHVGISSHEGKVASYKHFTCNVLPRIKGLGYNCIQLMAIMEHAYYASFGYQITSFFAASSRYGTPEELQELVDTAHSMGIIVLLDVVHSHASKNSADGLNMFDGTDSCYFHSGPRGTHDLWDSRLFAYSSWEILRFLLSNIRWWLEEYRFDGFRFDGVTSMLYHHHGVGQGFSGDYSEYFGLQVDEDALTYLMLANHLVHTLCPDSITIAEDVSGMPALCSPISQGGGGFDYRLAMAIPDKWIQLLKEFKDEDWNMGDIVYTLTNRRYLEKCIAYAESHDQALVGDKSLAFWLMDAEMYTNMSVLTPFTPVIDRGIQLHKMIRLITHGLGGEGYLNFMGNEFGHPEWLDFPRKGNNESYHYARRQFHLTDDDLLRYKFLNNFDRDMNRLEERYGWLAAPQAYVSEKHEGNKIIAFERAGLLFIFNFHPSKSYTDYRVGTALPGKFKIVLDSDAAEYGGHQRLDHSTDFFSEAFEHNGRPYSLLVYIPSRVALILQNVDLPN.

An N-acetylalanine modification is found at Ala2. Residues 62–63 and 91–93 each bind substrate; these read NE and WAP. (1,4-alpha-D-glucosyl)n is bound at residue Trp107. 118–121 contacts substrate; it reads DYGK. Lys143 contributes to the (1,4-alpha-D-glucosyl)n binding site. The residue at position 173 (Tyr173) is a Phosphotyrosine. 333–336 lines the substrate pocket; it reads EILR. Asp357 serves as the catalytic Nucleophile. The Proton donor role is filled by Glu412.

This sequence belongs to the glycosyl hydrolase 13 family. GlgB subfamily. Monomer.

The enzyme catalyses Transfers a segment of a (1-&gt;4)-alpha-D-glucan chain to a primary hydroxy group in a similar glucan chain.. It functions in the pathway glycan biosynthesis; glycogen biosynthesis. Functionally, glycogen-branching enzyme participates in the glycogen biosynthetic process along with glycogenin and glycogen synthase. Generates alpha-1,6-glucosidic branches from alpha-1,4-linked glucose chains, to increase solubility of the glycogen polymer. The sequence is that of 1,4-alpha-glucan-branching enzyme (GBE1) from Homo sapiens (Human).